The chain runs to 131 residues: Ribosome-binding factor A (131 aa).

This sequence belongs to the RbfA family. As to quaternary structure, monomer. Binds 30S ribosomal subunits, but not 50S ribosomal subunits or 70S ribosomes.

The protein localises to the cytoplasm. Its function is as follows. One of several proteins that assist in the late maturation steps of the functional core of the 30S ribosomal subunit. Associates with free 30S ribosomal subunits (but not with 30S subunits that are part of 70S ribosomes or polysomes). Required for efficient processing of 16S rRNA. May interact with the 5'-terminal helix region of 16S rRNA. The protein is Ribosome-binding factor A of Ruegeria pomeroyi (strain ATCC 700808 / DSM 15171 / DSS-3) (Silicibacter pomeroyi).